The primary structure comprises 443 residues: Amino-acid acetyltransferase (443 aa).

Residues 296-443 (EQIRRATIND…RSKVLMADLG (148 aa)) form the N-acetyltransferase domain.

The protein belongs to the acetyltransferase family. ArgA subfamily. Homohexamer.

Its subcellular location is the cytoplasm. The enzyme catalyses L-glutamate + acetyl-CoA = N-acetyl-L-glutamate + CoA + H(+). The protein operates within amino-acid biosynthesis; L-arginine biosynthesis; N(2)-acetyl-L-ornithine from L-glutamate: step 1/4. This is Amino-acid acetyltransferase (argA) from Salmonella typhi.